A 419-amino-acid polypeptide reads, in one-letter code: Transcription termination factor Rho (419 aa).

Residues 48 to 123 (DIFGDGVLEI…LKVNAVNYDK (76 aa)) form the Rho RNA-BD domain. RNA-binding stretches follow at residues 61–66 (GFGFLR), 78–80 (DIY), and 108–110 (ERY). Residues 169-174 (GRGQRG), 181-186 (KAGKTI), and Arg212 contribute to the ATP site. Positions 284–288 (VLTGG) are RNA-binding 2.

It belongs to the Rho family. In terms of assembly, homohexamer. The homohexamer assembles into an open ring structure.

Functionally, facilitates transcription termination by a mechanism that involves Rho binding to the nascent RNA, activation of Rho's RNA-dependent ATPase activity, and release of the mRNA from the DNA template. This chain is Transcription termination factor Rho, found in Buchnera aphidicola subsp. Schizaphis graminum (strain Sg).